Here is a 116-residue protein sequence, read N- to C-terminus: uncharacterized protein (116 aa).

This is an uncharacterized protein from Escherichia coli (strain K12).